Consider the following 1300-residue polypeptide: Insulin receptor-related protein (1300 aa).

A signal peptide spans 1-26; it reads MAVPALWPWGVHLLMSLLSLGSGLDT. N-linked (GlcNAc...) asparagine glycosylation is found at Asn-47 and Asn-100. Disulfide bonds link Cys-214–Cys-222, Cys-216–Cys-228, Cys-229–Cys-237, Cys-233–Cys-246, Cys-249–Cys-258, Cys-262–Cys-274, Cys-280–Cys-300, Cys-304–Cys-317, and Cys-320–Cys-324. N-linked (GlcNAc...) asparagine glycosylation occurs at Asn-311. 8 N-linked (GlcNAc...) asparagine glycosylation sites follow: Asn-411, Asn-492, Asn-528, Asn-616, Asn-634, Asn-756, Asn-885, and Asn-898. Fibronectin type-III domains are found at residues 483 to 603 and 607 to 707; these read QTRT…TLPA and VPQD…AQEV. A disulfide bridge links Cys-657 with Cys-864. The Extracellular portion of the chain corresponds to 747 to 921; that stretch reads EAGLLRLGKN…LEEEDTGGMR (175 aa). The Fibronectin type-III 3 domain occupies 818-913; that stretch reads IPGKVAWKAA…GVTFYITDLE (96 aa). A helical transmembrane segment spans residues 922–943; it reads IFLTVTPVGFMLLVTLAALGFF. Residues 944–1300 are Cytoplasmic-facing; the sequence is YSRKRNSTLY…YSAPNGGPGH (357 aa). In terms of domain architecture, Protein kinase spans 979-1254; the sequence is IAIIRELGQG…RIQDELRPSF (276 aa). Residues 985 to 993 and Lys-1013 contribute to the ATP site; that span reads LGQGSFGMV. Residue Asp-1115 is the Proton acceptor of the active site. Tyr-1145 and Tyr-1146 each carry phosphotyrosine; by autocatalysis. The disordered stretch occupies residues 1273–1300; that stretch reads LPTEAEPDSPPTLNGASDYSAPNGGPGH.

The protein belongs to the protein kinase superfamily. Tyr protein kinase family. Insulin receptor subfamily. Probable tetramer of 2 alpha and 2 beta chains linked by disulfide bonds. The alpha chains contribute to the formation of the ligand-binding domain, while the beta chains carry the kinase domain. Post-translationally, autophosphorylated on tyrosine residues between pH 7.9 and pH 10.5. In terms of tissue distribution, highly expressed in the islets as well as in pancreatic beta-cells.

It localises to the membrane. It catalyses the reaction L-tyrosyl-[protein] + ATP = O-phospho-L-tyrosyl-[protein] + ADP + H(+). Its function is as follows. Receptor with tyrosine-protein kinase activity. Functions as a pH sensing receptor which is activated by increased extracellular pH. Activates an intracellular signaling pathway that involves IRS1 and AKT1/PKB. The protein is Insulin receptor-related protein (Insrr) of Mus musculus (Mouse).